Consider the following 648-residue polypeptide: Sodium/nucleoside cotransporter 1 (648 aa).

At 1-83 (MADDTPRQRE…LCREHWQLFE (83 aa)) the chain is on the cytoplasmic side. The chain crosses the membrane as a helical span at residues 84 to 104 (WISKGLLSTAYIGFLIVACLL). At 105–108 (DFPR) the chain is on the extracellular side. A helical membrane pass occupies residues 109 to 129 (ALALFVITCVVLVFLAYNLLK). Residues 130 to 147 (RLLGSKLKKCVKFQGHSC) lie on the Cytoplasmic side of the membrane. Residues 148–168 (LSLWLKRGLALAAGLGVILWL) form a helical membrane-spanning segment. Topologically, residues 169 to 175 (SLDTAQR) are extracellular. A helical membrane pass occupies residues 176–196 (PEQLVSFAGICVFLVLLFAGS). Residues 197–201 (KHHRA) are Cytoplasmic-facing. Residues 202–222 (VSWRAVSWGLGLQFVLGLFVI) form a helical membrane-spanning segment. Residues 223 to 265 (RTEPGFVAFQWLGDQIRVFLSYTEAGSSFVFGEALVKDVFAFQ) lie on the Extracellular side of the membrane. Residues 266–286 (VLPIIVFFSCVMSVLYYLGLM) traverse the membrane as a helical segment. Residues 287 to 294 (QWVILKIA) lie on the Cytoplasmic side of the membrane. The chain crosses the membrane as a helical span at residues 295–318 (WLMQVTMGTSATETLSVAGNIFVS). Over 319–339 (QTEAPLLIRPYLADMTLSEVH) the chain is Extracellular. The helical transmembrane segment at 340-360 (VVMTGGYATIAGSLLGAYISF) threads the bilayer. A topological domain (cytoplasmic) is located at residue G361. A helical membrane pass occupies residues 362–380 (IDASSLIAASVMAAPCALA). Topologically, residues 381 to 427 (LSKLVYPEVEESKFRSEEGVKLTYGDAQNLVEAASAGAAISVKVVAN) are extracellular. Residues 428–448 (IAANLIAFLAVLAFINAALSW) traverse the membrane as a helical segment. At 449-470 (LGDMVDIQGLSFQLICSYVLRP) the chain is on the cytoplasmic side. A helical membrane pass occupies residues 471–491 (VAFLMGVAWEDCPVVAELLGI). Residues 492-531 (KLFLNEFVAYQELSQYKQRRLAGAEEWLGDKKQWISVRAE) lie on the Extracellular side of the membrane. A helical membrane pass occupies residues 532–552 (ILTTYALCGFANFSSIGIMLG). The Cytoplasmic portion of the chain corresponds to 553–571 (GLTSMVPQRRSDFSQIVLR). The chain crosses the membrane as a helical span at residues 572 to 592 (ALITGAFVSLVNACVAGILYV). The Extracellular portion of the chain corresponds to 593-648 (PRGVEVDCMSLLNQTVSSSSFEVYLCCRQVFQNTSLEFGQEALHNCCRFYNHTVCT). N-linked (GlcNAc...) asparagine glycosylation is found at N605, N625, and N643.

This sequence belongs to the concentrative nucleoside transporter (CNT) (TC 2.A.41) family. In terms of processing, N-glycosylated. N-glycosylation is required for localization to the plasma membrane and the transporter activity.

The protein resides in the cell membrane. It localises to the apical cell membrane. It carries out the reaction uridine(out) + Na(+)(out) = uridine(in) + Na(+)(in). It catalyses the reaction thymidine(out) + Na(+)(out) = thymidine(in) + Na(+)(in). The enzyme catalyses cytidine(out) + Na(+)(out) = cytidine(in) + Na(+)(in). The catalysed reaction is adenosine(out) + Na(+)(out) = adenosine(in) + Na(+)(in). With respect to regulation, due to its high apparent affinity but slow transport, adenosine could act as a negative regulator of pyrimidine transport under some conditions. In terms of biological role, sodium and pyrimidine nucleoside symporter of the plasma membrane that imports uridine, thymidine and cytidine into cells by coupling their transport to the transmembrane sodium electrochemical gradient. Also transports adenosine, an atypical substrate transported with high apparent affinity, but low maximum velocity. Therefore, exhibits the transport characteristics of the nucleoside transport system cit or N2 subtype (N2/cit). Involved in renal nucleoside (re)absorption. The protein is Sodium/nucleoside cotransporter 1 of Mus musculus (Mouse).